A 616-amino-acid polypeptide reads, in one-letter code: Replication protein A 70 kDa DNA-binding subunit (616 aa).

At M1 the chain carries N-acetylmethionine. Residues K22 and K88 each participate in a glycyl lysine isopeptide (Lys-Gly) (interchain with G-Cter in ubiquitin) cross-link. The tract at residues 121-155 (GLGQPQVAPPAPAASPAASSRPQPQNGTSGAGSTV) is disordered. The segment covering 134–145 (ASPAASSRPQPQ) has biased composition (low complexity). The span at 146 to 155 (NGTSGAGSTV) shows a compositional bias: polar residues. Residues K163 and K167 each carry the N6-acetyllysine; alternate modification. Residues K163 and K167 each participate in a glycyl lysine isopeptide (Lys-Gly) (interchain with G-Cter in ubiquitin); alternate cross-link. T180 carries the post-translational modification Phosphothreonine. K183 participates in a covalent cross-link: Glycyl lysine isopeptide (Lys-Gly) (interchain with G-Cter in ubiquitin). T191 carries the phosphothreonine modification. The segment at residues 197-281 (WTICARVTNK…VKNDYEMTFN (85 aa)) is a DNA-binding region (OB). Glycyl lysine isopeptide (Lys-Gly) (interchain with G-Cter in ubiquitin) cross-links involve residues K220 and K244. An N6-acetyllysine; alternate modification is found at K259. Residue K259 forms a Glycyl lysine isopeptide (Lys-Gly) (interchain with G-Cter in ubiquitin); alternate linkage. Residues K267 and K331 each participate in a glycyl lysine isopeptide (Lys-Gly) (interchain with G-Cter in ubiquitin) cross-link. S384 carries the phosphoserine modification. Glycyl lysine isopeptide (Lys-Gly) (interchain with G-Cter in ubiquitin) cross-links involve residues K410 and K431. K449 is covalently cross-linked (Glycyl lysine isopeptide (Lys-Gly) (interchain with G-Cter in SUMO)). Residue K458 forms a Glycyl lysine isopeptide (Lys-Gly) (interchain with G-Cter in ubiquitin) linkage. The C4-type zinc-finger motif lies at 481-503 (CPTQDCNKKVIDQQNGLYRCEKC). K553 is covalently cross-linked (Glycyl lysine isopeptide (Lys-Gly) (interchain with G-Cter in ubiquitin)). K577 is covalently cross-linked (Glycyl lysine isopeptide (Lys-Gly) (interchain with G-Cter in SUMO)).

The protein belongs to the replication factor A protein 1 family. In terms of assembly, component of the canonical replication protein A complex (RPA), a heterotrimer composed of RPA1, RPA2 and RPA3. The DNA-binding activity may reside exclusively on the RPA1 subunit. Interacts with PRPF19; the PRP19-CDC5L complex is recruited to the sites of DNA repair where it ubiquitinates the replication protein A complex (RPA). Interacts with RIPK1. Interacts with the polymerase alpha subunit POLA1/p180; this interaction stabilizes the replicative complex and reduces the misincorporation rate of DNA polymerase alpha by acting as a fidelity clamp. Interacts with RAD51 and SENP6 to regulate DNA repair. Interacts with HELB; this interaction promotes HELB recruitment to chromatin following DNA damage. Interacts with PRIMPOL; leading to recruit PRIMPOL on chromatin and stimulate its DNA primase activity. Interacts with XPA; the interaction is direct and associates XPA with the RPA complex. Interacts with ETAA1; the interaction is direct and promotes ETAA1 recruitment at stalled replication forks. Interacts with RPA1; this interaction associates HROB with the RPA complex. Interacts (when poly-ADP-ribosylated) with HTATSF1. Post-translationally, DNA damage-induced 'Lys-63'-linked polyubiquitination by PRPF19 mediates ATRIP recruitment to the RPA complex at sites of DNA damage and activation of ATR. Ubiquitinated by RFWD3 at stalled replication forks in response to DNA damage: ubiquitination by RFWD3 does not lead to degradation by the proteasome and promotes removal of the RPA complex from stalled replication forks, promoting homologous recombination. In terms of processing, sumoylated on lysine residues Lys-449 and Lys-577, with Lys-449 being the major site. Sumoylation promotes recruitment of RAD51 to the DNA damage foci to initiate DNA repair through homologous recombination. Desumoylated by SENP6. Poly-ADP-ribosylated by PARP1; promoting recruitment of HTATSF1.

It is found in the nucleus. It localises to the PML body. Functionally, as part of the heterotrimeric replication protein A complex (RPA/RP-A), binds and stabilizes single-stranded DNA intermediates, that form during DNA replication or upon DNA stress. It prevents their reannealing and in parallel, recruits and activates different proteins and complexes involved in DNA metabolism. Thereby, it plays an essential role both in DNA replication and the cellular response to DNA damage. In the cellular response to DNA damage, the RPA complex controls DNA repair and DNA damage checkpoint activation. Through recruitment of ATRIP activates the ATR kinase a master regulator of the DNA damage response. It is required for the recruitment of the DNA double-strand break repair factors RAD51 and RAD52 to chromatin in response to DNA damage. Also recruits to sites of DNA damage proteins like XPA and XPG that are involved in nucleotide excision repair and is required for this mechanism of DNA repair. Also plays a role in base excision repair (BER) probably through interaction with UNG. Also recruits SMARCAL1/HARP, which is involved in replication fork restart, to sites of DNA damage. May also play a role in telomere maintenance. The protein is Replication protein A 70 kDa DNA-binding subunit (RPA1) of Pongo abelii (Sumatran orangutan).